Reading from the N-terminus, the 141-residue chain is Hemoglobin subunit alpha-D (141 aa).

The region spanning 1 to 141 (MLTADDKKIL…VAAVLAEKYR (141 aa)) is the Globin domain. The heme b site is built by His58 and His87.

This sequence belongs to the globin family. As to quaternary structure, heterotetramer of two alpha-D chains and two beta chains. In terms of tissue distribution, red blood cells.

Functionally, involved in oxygen transport from the lung to the various peripheral tissues. The sequence is that of Hemoglobin subunit alpha-D (HBAD) from Branta canadensis (Canada goose).